The following is a 361-amino-acid chain: Phospho-N-acetylmuramoyl-pentapeptide-transferase (361 aa).

The next 10 membrane-spanning stretches (helical) occupy residues 27-47 (ILASLTALIVGLLCGPLMIRW), 70-90 (GTPTMGGVLILLAITVSCLLW), 97-117 (SLWLVLLVTLANGLVGWVDDY), 134-154 (YFWQSVIALVAVSYLYWNASL), 167-187 (TVTWDLGVFFPVLAYFVIVGS), 199-219 (GLAIMPIVMVAGALGVFAYAS), 236-256 (TGELTIFCSSIVGAGLGFLWY), 263-283 (VFMGDVGSLALGAALGIVAIV), 288-308 (LVLLIMGGLFVIETLSVILQV), and 338-358 (KVIVRFWIITVVFVLCGLATL).

It belongs to the glycosyltransferase 4 family. MraY subfamily. It depends on Mg(2+) as a cofactor.

The protein resides in the cell inner membrane. The enzyme catalyses UDP-N-acetyl-alpha-D-muramoyl-L-alanyl-gamma-D-glutamyl-meso-2,6-diaminopimeloyl-D-alanyl-D-alanine + di-trans,octa-cis-undecaprenyl phosphate = di-trans,octa-cis-undecaprenyl diphospho-N-acetyl-alpha-D-muramoyl-L-alanyl-D-glutamyl-meso-2,6-diaminopimeloyl-D-alanyl-D-alanine + UMP. Its pathway is cell wall biogenesis; peptidoglycan biosynthesis. Its function is as follows. Catalyzes the initial step of the lipid cycle reactions in the biosynthesis of the cell wall peptidoglycan: transfers peptidoglycan precursor phospho-MurNAc-pentapeptide from UDP-MurNAc-pentapeptide onto the lipid carrier undecaprenyl phosphate, yielding undecaprenyl-pyrophosphoryl-MurNAc-pentapeptide, known as lipid I. This is Phospho-N-acetylmuramoyl-pentapeptide-transferase from Legionella pneumophila (strain Paris).